We begin with the raw amino-acid sequence, 318 residues long: Methionyl-tRNA formyltransferase (318 aa).

112–115 provides a ligand contact to (6S)-5,6,7,8-tetrahydrofolate; it reads SILP.

This sequence belongs to the Fmt family.

It catalyses the reaction L-methionyl-tRNA(fMet) + (6R)-10-formyltetrahydrofolate = N-formyl-L-methionyl-tRNA(fMet) + (6S)-5,6,7,8-tetrahydrofolate + H(+). Its function is as follows. Attaches a formyl group to the free amino group of methionyl-tRNA(fMet). The formyl group appears to play a dual role in the initiator identity of N-formylmethionyl-tRNA by promoting its recognition by IF2 and preventing the misappropriation of this tRNA by the elongation apparatus. The protein is Methionyl-tRNA formyltransferase of Shewanella baltica (strain OS195).